The following is a 287-amino-acid chain: Glutamate racemase (287 aa).

Substrate is bound by residues 32-33 and 64-65; these read DS and YG. C96 serves as the catalytic Proton donor/acceptor. 97 to 98 lines the substrate pocket; sequence NT. Catalysis depends on C208, which acts as the Proton donor/acceptor. 209–210 contacts substrate; sequence TH.

It belongs to the aspartate/glutamate racemases family.

The catalysed reaction is L-glutamate = D-glutamate. The protein operates within cell wall biogenesis; peptidoglycan biosynthesis. Functionally, provides the (R)-glutamate required for cell wall biosynthesis. This Yersinia enterocolitica serotype O:8 / biotype 1B (strain NCTC 13174 / 8081) protein is Glutamate racemase.